We begin with the raw amino-acid sequence, 314 residues long: tRNA-cytidine(32) 2-sulfurtransferase (314 aa).

The PP-loop motif signature appears at 46 to 51 (SGGKDS). [4Fe-4S] cluster contacts are provided by cysteine 121, cysteine 124, and cysteine 212.

The protein belongs to the TtcA family. Homodimer. Mg(2+) is required as a cofactor. It depends on [4Fe-4S] cluster as a cofactor.

It localises to the cytoplasm. It carries out the reaction cytidine(32) in tRNA + S-sulfanyl-L-cysteinyl-[cysteine desulfurase] + AH2 + ATP = 2-thiocytidine(32) in tRNA + L-cysteinyl-[cysteine desulfurase] + A + AMP + diphosphate + H(+). It participates in tRNA modification. Catalyzes the ATP-dependent 2-thiolation of cytidine in position 32 of tRNA, to form 2-thiocytidine (s(2)C32). The sulfur atoms are provided by the cysteine/cysteine desulfurase (IscS) system. The sequence is that of tRNA-cytidine(32) 2-sulfurtransferase from Nitrosomonas europaea (strain ATCC 19718 / CIP 103999 / KCTC 2705 / NBRC 14298).